The sequence spans 617 residues: Proline--tRNA ligase (617 aa).

The protein belongs to the class-II aminoacyl-tRNA synthetase family. ProS type 1 subfamily. In terms of assembly, homodimer.

Its subcellular location is the cytoplasm. The catalysed reaction is tRNA(Pro) + L-proline + ATP = L-prolyl-tRNA(Pro) + AMP + diphosphate. Functionally, catalyzes the attachment of proline to tRNA(Pro) in a two-step reaction: proline is first activated by ATP to form Pro-AMP and then transferred to the acceptor end of tRNA(Pro). As ProRS can inadvertently accommodate and process non-cognate amino acids such as alanine and cysteine, to avoid such errors it has two additional distinct editing activities against alanine. One activity is designated as 'pretransfer' editing and involves the tRNA(Pro)-independent hydrolysis of activated Ala-AMP. The other activity is designated 'posttransfer' editing and involves deacylation of mischarged Ala-tRNA(Pro). The misacylated Cys-tRNA(Pro) is not edited by ProRS. This is Proline--tRNA ligase from Streptococcus pneumoniae (strain ATCC 700669 / Spain 23F-1).